A 510-amino-acid chain; its full sequence is Ribonuclease Y (510 aa).

The helical transmembrane segment at 2 to 22 (IYIIFSSIFAGFILGFLVRVF) threads the bilayer. The KH domain occupies 198–258 (TVASVELPND…IRKELAKRTL (61 aa)). Positions 324–419 (VLSHSKETAI…VQIADAISAS (96 aa)) constitute an HD domain.

The protein belongs to the RNase Y family.

Its subcellular location is the cell membrane. Functionally, endoribonuclease that initiates mRNA decay. The protein is Ribonuclease Y of Borreliella burgdorferi (strain ATCC 35210 / DSM 4680 / CIP 102532 / B31) (Borrelia burgdorferi).